Here is a 225-residue protein sequence, read N- to C-terminus: Lipid A 4'-phosphatase (225 aa).

The next 6 helical transmembrane spans lie at 29–49 (SAFTGKVIWVPMYASILYILL), 51–71 (NFHWKVALCYVVAIALTITFA), 110–130 (FGFPSCHAANSFGLAIFLICL), 136–156 (LSIFIVLWAFTNSYTRLYLGL), 160–180 (GDLVAGAIIGGFGGWLFYFIA), and 203–223 (TEVMIYTGLLTLAGIIIYSIV).

This sequence belongs to the lipid A LpxF 4'-phosphatase family.

The protein resides in the cell inner membrane. It functions in the pathway bacterial outer membrane biogenesis; LPS lipid A biosynthesis. In terms of biological role, probably removes the 4'-phosphate group from lipid A. Removal of this phosphate group confers resistance to cationic antimicrobial peptides (CAMPs), inflammation-associated peptides produced by the human host. This LPS modification helps maintain the stability of this commensal bacterium in gut microbiota. The protein is Lipid A 4'-phosphatase of Bacteroides thetaiotaomicron (strain ATCC 29148 / DSM 2079 / JCM 5827 / CCUG 10774 / NCTC 10582 / VPI-5482 / E50).